Consider the following 337-residue polypeptide: DNA-directed RNA polymerase subunit alpha (337 aa).

The alpha N-terminal domain (alpha-NTD) stretch occupies residues 1-233 (MIQKNWQELI…DQLSIFVNFE (233 aa)). Positions 249-337 (FNPALLKKVD…DLAKRYEDQY (89 aa)) are alpha C-terminal domain (alpha-CTD).

It belongs to the RNA polymerase alpha chain family. As to quaternary structure, homodimer. The RNAP catalytic core consists of 2 alpha, 1 beta, 1 beta' and 1 omega subunit. When a sigma factor is associated with the core the holoenzyme is formed, which can initiate transcription.

It carries out the reaction RNA(n) + a ribonucleoside 5'-triphosphate = RNA(n+1) + diphosphate. In terms of biological role, DNA-dependent RNA polymerase catalyzes the transcription of DNA into RNA using the four ribonucleoside triphosphates as substrates. This is DNA-directed RNA polymerase subunit alpha from Brucella abortus (strain S19).